We begin with the raw amino-acid sequence, 163 residues long: Probable calcium-binding protein CML26 (163 aa).

The residue at position 2 (alanine 2) is an N-acetylalanine. EF-hand domains lie at 16 to 51, 52 to 82, 85 to 120, and 121 to 156; these read STDMELKKVFDKFDANGDGKISVSELGNVFKSMGTS, YTEEELNRVLDEIDIDCDGFINQEEFATICR, SSAVEIREAFDLYDQNKNGLISSSEIHKVLNRLGMT, and CSVEDCVRMIGHVDTDGDGNVNFEEFQKMMSSPELV. Ca(2+)-binding residues include aspartate 29, asparagine 31, aspartate 33, lysine 35, glutamate 40, aspartate 65, aspartate 67, aspartate 69, glutamate 76, aspartate 98, asparagine 100, asparagine 102, glutamate 109, aspartate 134, aspartate 136, aspartate 138, asparagine 140, and glutamate 145.

Potential calcium sensor. The chain is Probable calcium-binding protein CML26 (CML26) from Arabidopsis thaliana (Mouse-ear cress).